A 430-amino-acid chain; its full sequence is Adenylosuccinate synthetase (430 aa).

GTP contacts are provided by residues 12-18 and 40-42; these read GDEGKGK and GHT. Residue Asp13 is the Proton acceptor of the active site. Mg(2+) is bound by residues Asp13 and Gly40. IMP contacts are provided by residues 13-16, 38-41, Thr128, Arg142, Gln223, Thr238, and Arg302; these read DEGK and NAGH. Residue His41 is the Proton donor of the active site. Position 298-304 (298-304) interacts with substrate; it reads TTTGRPR. Residues Arg304, 330-332, and 412-414 contribute to the GTP site; these read LLD and SVG.

The protein belongs to the adenylosuccinate synthetase family. Homodimer. The cofactor is Mg(2+).

The protein resides in the cytoplasm. The enzyme catalyses IMP + L-aspartate + GTP = N(6)-(1,2-dicarboxyethyl)-AMP + GDP + phosphate + 2 H(+). It functions in the pathway purine metabolism; AMP biosynthesis via de novo pathway; AMP from IMP: step 1/2. Functionally, plays an important role in the de novo pathway of purine nucleotide biosynthesis. Catalyzes the first committed step in the biosynthesis of AMP from IMP. This is Adenylosuccinate synthetase from Listeria monocytogenes serovar 1/2a (strain ATCC BAA-679 / EGD-e).